The sequence spans 242 residues: tRNA pseudouridine synthase A (242 aa).

The Nucleophile role is filled by aspartate 51. Tyrosine 107 is a binding site for substrate.

This sequence belongs to the tRNA pseudouridine synthase TruA family. In terms of assembly, homodimer.

The enzyme catalyses uridine(38/39/40) in tRNA = pseudouridine(38/39/40) in tRNA. Its function is as follows. Formation of pseudouridine at positions 38, 39 and 40 in the anticodon stem and loop of transfer RNAs. This Helicobacter pylori (strain ATCC 700392 / 26695) (Campylobacter pylori) protein is tRNA pseudouridine synthase A.